The primary structure comprises 159 residues: Cyclic pyranopterin monophosphate synthase (159 aa).

Residues 75-77 (LCH) and 113-114 (ME) each bind substrate. Asp128 is an active-site residue.

Belongs to the MoaC family. In terms of assembly, homohexamer; trimer of dimers.

It catalyses the reaction (8S)-3',8-cyclo-7,8-dihydroguanosine 5'-triphosphate = cyclic pyranopterin phosphate + diphosphate. Its pathway is cofactor biosynthesis; molybdopterin biosynthesis. Its function is as follows. Catalyzes the conversion of (8S)-3',8-cyclo-7,8-dihydroguanosine 5'-triphosphate to cyclic pyranopterin monophosphate (cPMP). This chain is Cyclic pyranopterin monophosphate synthase, found in Cupriavidus necator (strain ATCC 17699 / DSM 428 / KCTC 22496 / NCIMB 10442 / H16 / Stanier 337) (Ralstonia eutropha).